A 652-amino-acid chain; its full sequence is Phosphomethylpyrimidine synthase (652 aa).

Substrate contacts are provided by residues Asn-235, Met-264, Tyr-293, His-329, 349–351 (SRG), 390–393 (DGMR), and Glu-429. Zn(2+) is bound at residue His-433. Tyr-456 contributes to the substrate binding site. His-497 provides a ligand contact to Zn(2+). Positions 577, 580, and 585 each coordinate [4Fe-4S] cluster.

The protein belongs to the ThiC family. Homodimer. The cofactor is [4Fe-4S] cluster.

The catalysed reaction is 5-amino-1-(5-phospho-beta-D-ribosyl)imidazole + S-adenosyl-L-methionine = 4-amino-2-methyl-5-(phosphooxymethyl)pyrimidine + CO + 5'-deoxyadenosine + formate + L-methionine + 3 H(+). It participates in cofactor biosynthesis; thiamine diphosphate biosynthesis. Catalyzes the synthesis of the hydroxymethylpyrimidine phosphate (HMP-P) moiety of thiamine from aminoimidazole ribotide (AIR) in a radical S-adenosyl-L-methionine (SAM)-dependent reaction. The chain is Phosphomethylpyrimidine synthase from Shewanella woodyi (strain ATCC 51908 / MS32).